The primary structure comprises 1077 residues: Ubiquitin-activating enzyme E1 2 (1077 aa).

Residues 16 to 36 (SPMKKRRIDHTESADGSAINA) are disordered. ATP is bound by residues Ala-499, Asp-525, Arg-536, Lys-549, and 597–598 (DN). The active-site Glycyl thioester intermediate is the Cys-653.

The protein belongs to the ubiquitin-activating E1 family. In terms of assembly, monomer. As to expression, expressed in leaves, flowers, roots and stems. Detected in germinating seeds, cotyledons, hypocotyls, vascular tissues, anthers, filaments, pollen, style, stigma, sepals, petals, ovary, developing ovules, funiculi and silique walls.

The catalysed reaction is ATP + ubiquitin + [E1 ubiquitin-activating enzyme]-L-cysteine = AMP + diphosphate + S-ubiquitinyl-[E1 ubiquitin-activating enzyme]-L-cysteine.. It functions in the pathway protein modification; protein ubiquitination. Activates ubiquitin by first adenylating its C-terminal glycine residue with ATP, and thereafter linking this residue to the side chain of a cysteine residue in E1, yielding a ubiquitin-E1 thioester and free AMP. In Arabidopsis thaliana (Mouse-ear cress), this protein is Ubiquitin-activating enzyme E1 2 (UBA2).